The chain runs to 1367 residues: METQLQSIFEEVVKTEIIEEAFPGMFMDTPEDEKTKLISCLAAFRQFWNGLSQESHEQCVQWIVKFIHGQHSPKRISFLYDCLAMAVETGLLPPRMVCESLINSDTLEWERTQLWALTFKLVRKIIGGVDYKGVRDLLKVILEKILTIPNTVSSAVVQQLLAAREVIAYILERNACLLPAYFAVTEIRKLYPEGKLPHWLLGNLVSDFVDTFRPTARINSICGRCSLLPVVNNSGAICNSWKLDPATLRFPLKGLLPYDKDLFEPQTALLRYVLEQPYSRDMVCNMLGLNKQHKQRCPVLEDQLVDLVVYAMERSETEEKFDDGGTSQLLWQHLSSQLIFFVLFQFASFPHMVLSLHQKLAGRGLIKGRDHLMWVLLQFISGSIQKNALADFLPVMKLFDLLYPEKECIPVPDINKPQSTHAFAMTCIWIHLNRKAQNDNSKLQIPIPHSLKLHHEFLQQSLRNKSLQMNDYKIALLCNAYSTNSECFTLPMGALVETIYGNGIMRVPLPGTSCLASASVTPLPMNLLDSLTVHAKMSLIHSIATRVIKLAHTKSSVALAPALVETYSRLLVYMEIESLGIKGFISQLLPTVFKSHAWGILHTLLEMFSHRMHHIQPHYRVQLLSHLHTLAAVAQTNQNQLHLCVESTALRLITALGSSEVQPQFTRFLNDPKTVLSAESEELNRALILTLARATHVTDFFTGSDSIQGTWCKDILQTIMTFTPHNWASHTLSCFPAPLQAFFKQNNVPQESRFNLKKNVEEEYRKWKSMTDENEIITQFSMQGFPPLFLCLLWKMLLETDHISQIGYKVLERIGARALVAHVRTFADFLVYEFSTSAGGQQLNKCIEILNDMVWKYNIVTLDRLILCLAMRSHEGNEAQVCYFIIQLLLLKPNDFRNRVSDFVKENSPEHWLQSDWHTKHMSYHKKYPEKLYFEGLAEQVDPPVPIQSPYLPIYFGNVCLRFLPVFDIVIHRFLELLPVSKSLETLLDHLGGLYKFHDRPVTYLYNTLHYYEMCLRNRDHLKRKLVHAIIGSLKDNRPQGWCLSDTYLKHAMNAREDNPWVPEDSYYCKLIGRLVDTMAGKSPGPFPNCDWRFNEFPNPAAHALHVTCVELMALAVPGKDVGNALLNVVLKSQPLVPRENITAWMNAIGLIITALPEPYWIVLHDRIVSVISSSSLTSETEWVGYPFRLFDFTACHQSYSEMSCSYTLALAHAVWHHSSIGQLSLIPKFLTEVLLPVVKTEFQLLYVYHLVGPFLQRFQQERTRCMIEIGVAFYDMLLNVDQCSTHLNYMDPICDFLYHMKYMFTGDSVKEQVEKIICNLKPALKLRLRFITHISKMEPAVPPQALSSGSPAPQANQVPTALPVTQ.

A disordered region spans residues 1343 to 1367 (PPQALSSGSPAPQANQVPTALPVTQ). Over residues 1346 to 1367 (ALSSGSPAPQANQVPTALPVTQ) the composition is skewed to polar residues.

It belongs to the Mediator complex subunit 23 family. Component of the Mediator complex, which is composed of MED1, MED4, MED6, MED7, MED8, MED9, MED10, MED11, MED12, MED13, MED13L, MED14, MED15, MED16, MED17, MED18, MED19, MED20, MED21, MED22, MED23, MED24, MED25, MED26, MED27, MED29, MED30, MED31, CCNC, CDK8 and CDC2L6/CDK11. The MED12, MED13, CCNC and CDK8 subunits form a distinct module termed the CDK8 module. Mediator containing the CDK8 module is less active than Mediator lacking this module in supporting transcriptional activation. Individual preparations of the Mediator complex lacking one or more distinct subunits have been variously termed ARC, CRSP, DRIP, PC2, SMCC and TRAP. Interacts with CDK8, CEBPB, CTNNB1, ELK1 and GLI3. Interacts with the adenovirus E1A protein.

Its subcellular location is the nucleus. Component of the Mediator complex, a coactivator involved in the regulated transcription of nearly all RNA polymerase II-dependent genes. Mediator functions as a bridge to convey information from gene-specific regulatory proteins to the basal RNA polymerase II transcription machinery. Mediator is recruited to promoters by direct interactions with regulatory proteins and serves as a scaffold for the assembly of a functional pre-initiation complex with RNA polymerase II and the general transcription factors. Also required for transcriptional activation subsequent to the assembly of the pre-initiation complex. Required for transcriptional activation by adenovirus E1A protein. Required for ELK1-dependent transcriptional activation in response to activated Ras signaling. This chain is Mediator of RNA polymerase II transcription subunit 23 (Med23), found in Rattus norvegicus (Rat).